Reading from the N-terminus, the 212-residue chain is Large ribosomal subunit protein bL25 (212 aa).

Residues methionine 1–leucine 25 form a disordered region. Positions lysine 13 to arginine 24 are enriched in basic and acidic residues.

This sequence belongs to the bacterial ribosomal protein bL25 family. CTC subfamily. In terms of assembly, part of the 50S ribosomal subunit; part of the 5S rRNA/L5/L18/L25 subcomplex. Contacts the 5S rRNA. Binds to the 5S rRNA independently of L5 and L18.

Functionally, this is one of the proteins that binds to the 5S RNA in the ribosome where it forms part of the central protuberance. This Leptospira borgpetersenii serovar Hardjo-bovis (strain L550) protein is Large ribosomal subunit protein bL25.